The primary structure comprises 263 residues: Kallikrein 1-related peptidase b24 (263 aa).

A signal peptide spans 1-17; sequence MWFLILFLALSLGGIDA. Positions 18–24 are cleaved as a propeptide — activation peptide; it reads APPVQSR. Positions 25 to 260 constitute a Peptidase S1 domain; it reads VVGGFKCEKN…FASWIKDTMA (236 aa). Disulfide bonds link Cys-31–Cys-175, Cys-50–Cys-66, Cys-154–Cys-221, Cys-186–Cys-200, and Cys-211–Cys-236. The Charge relay system role is filled by His-65. N-linked (GlcNAc...) asparagine glycans are attached at residues Asn-69 and Asn-105. Residue Asp-122 is the Charge relay system of the active site. An N-linked (GlcNAc...) asparagine glycan is attached at Asn-185. Ser-215 (charge relay system) is an active-site residue.

It belongs to the peptidase S1 family. Kallikrein subfamily.

The enzyme catalyses Preferential cleavage of Arg-|-Xaa bonds in small molecule substrates. Highly selective action to release kallidin (lysyl-bradykinin) from kininogen involves hydrolysis of Met-|-Xaa or Leu-|-Xaa.. Glandular kallikreins cleave Met-Lys and Arg-Ser bonds in kininogen to release Lys-bradykinin. The polypeptide is Kallikrein 1-related peptidase b24 (Klk1b24) (Mus musculus (Mouse)).